The following is a 618-amino-acid chain: Chaperone protein dnaK (618 aa).

The disordered stretch occupies residues 595–618; that stretch reads SKTETTTPNKNEEDVIDASFSEEK.

The protein belongs to the heat shock protein 70 family.

Its subcellular location is the plastid. It is found in the cyanelle. Acts as a chaperone. This Cyanophora paradoxa protein is Chaperone protein dnaK (dnaK-A).